The sequence spans 174 residues: Ribosome rescue factor SmrB (174 aa).

The Smr domain occupies L96–E171.

This sequence belongs to the SmrB family. In terms of assembly, associates with collided ribosomes, but not with correctly translating polysomes.

Functionally, acts as a ribosome collision sensor. Detects stalled/collided disomes (pairs of ribosomes where the leading ribosome is stalled and a second ribosome has collided with it) and endonucleolytically cleaves mRNA at the 5' boundary of the stalled ribosome. Stalled/collided disomes form a new interface (primarily via the 30S subunits) that binds SmrB. Cleaved mRNA becomes available for tmRNA ligation, leading to ribosomal subunit dissociation and rescue of stalled ribosomes. This chain is Ribosome rescue factor SmrB, found in Tolumonas auensis (strain DSM 9187 / NBRC 110442 / TA 4).